We begin with the raw amino-acid sequence, 402 residues long: NADH-quinone oxidoreductase subunit D (402 aa).

Belongs to the complex I 49 kDa subunit family. As to quaternary structure, NDH-1 is composed of 14 different subunits. Subunits NuoB, C, D, E, F, and G constitute the peripheral sector of the complex.

It localises to the cell inner membrane. It catalyses the reaction a quinone + NADH + 5 H(+)(in) = a quinol + NAD(+) + 4 H(+)(out). NDH-1 shuttles electrons from NADH, via FMN and iron-sulfur (Fe-S) centers, to quinones in the respiratory chain. The immediate electron acceptor for the enzyme in this species is believed to be ubiquinone. Couples the redox reaction to proton translocation (for every two electrons transferred, four hydrogen ions are translocated across the cytoplasmic membrane), and thus conserves the redox energy in a proton gradient. This is NADH-quinone oxidoreductase subunit D from Azorhizobium caulinodans (strain ATCC 43989 / DSM 5975 / JCM 20966 / LMG 6465 / NBRC 14845 / NCIMB 13405 / ORS 571).